The following is a 248-amino-acid chain: MKLIINADDFGFTRAINYGIIDAHNLGVLTSTTLMVTMPAFEHAVDLSKKTPTLGIGLHLNLTLGKPLTNGATLVNEDGELIKPKFTTPEYPYNEEEVYQEFKAQYHRFTEFMKKKPSHLDSHLFSTDIYPVVTSAAKRLAEEIGIPLRNHDTKGFEHVEFMWEKPLEIPYGEYDNLDYIYDNAASILCYDYVEIMTHPGYLDTFILENSTFSTPRANELESLISPRMRQFLNENNVELISYHDIPKK.

The Mg(2+) site is built by His59 and His123.

The protein belongs to the YdjC deacetylase family. As to quaternary structure, homodimer. It depends on Mg(2+) as a cofactor.

Probably catalyzes the deacetylation of acetylated carbohydrates an important step in the degradation of oligosaccharides. This is Carbohydrate deacetylase 2 from Listeria innocua serovar 6a (strain ATCC BAA-680 / CLIP 11262).